A 154-amino-acid chain; its full sequence is Transcriptional repressor NrdR (154 aa).

The segment at 3–34 (CPFCGNVDTQVKDSRPAEDNVAIRRRRFCPAC) is a zinc-finger region. The 91-residue stretch at 49–139 (LVVVKSSGRR…VYKNFQAADD (91 aa)) folds into the ATP-cone domain.

It belongs to the NrdR family. Zn(2+) serves as cofactor.

Negatively regulates transcription of bacterial ribonucleotide reductase nrd genes and operons by binding to NrdR-boxes. The protein is Transcriptional repressor NrdR of Paracoccus denitrificans (strain Pd 1222).